Here is a 252-residue protein sequence, read N- to C-terminus: Ditrans,polycis-undecaprenyl-diphosphate synthase ((2E,6E)-farnesyl-diphosphate specific) (252 aa).

The active site involves Asp-25. Asp-25 lines the Mg(2+) pocket. Substrate is bound by residues 26 to 29 (GNGR), Trp-30, Arg-38, His-42, and 70 to 72 (SSE). The active-site Proton acceptor is the Asn-73. Residues Trp-74, Arg-76, and Arg-193 each coordinate substrate. His-198 serves as a coordination point for Mg(2+). 199–201 (RIS) provides a ligand contact to substrate. A Mg(2+)-binding site is contributed by Glu-212.

Belongs to the UPP synthase family. Homodimer. The cofactor is Mg(2+).

It catalyses the reaction 8 isopentenyl diphosphate + (2E,6E)-farnesyl diphosphate = di-trans,octa-cis-undecaprenyl diphosphate + 8 diphosphate. Its function is as follows. Catalyzes the sequential condensation of isopentenyl diphosphate (IPP) with (2E,6E)-farnesyl diphosphate (E,E-FPP) to yield (2Z,6Z,10Z,14Z,18Z,22Z,26Z,30Z,34E,38E)-undecaprenyl diphosphate (di-trans,octa-cis-UPP). UPP is the precursor of glycosyl carrier lipid in the biosynthesis of bacterial cell wall polysaccharide components such as peptidoglycan and lipopolysaccharide. The sequence is that of Ditrans,polycis-undecaprenyl-diphosphate synthase ((2E,6E)-farnesyl-diphosphate specific) from Salmonella paratyphi A (strain ATCC 9150 / SARB42).